The chain runs to 2293 residues: Protein Ycf2 A (2293 aa).

An ATP-binding site is contributed by 1647 to 1654 (GSIGTGRS).

The protein belongs to the Ycf2 family.

The protein resides in the plastid. The protein localises to the chloroplast stroma. Functionally, probable ATPase of unknown function. Its presence in a non-photosynthetic plant (Epifagus virginiana) and experiments in tobacco indicate that it has an essential function which is probably not related to photosynthesis. This Crucihimalaya wallichii (Rock-cress) protein is Protein Ycf2 A.